The sequence spans 893 residues: Desmocollin-1 (893 aa).

An N-terminal signal peptide occupies residues 1-29 (MAVASAAPGSIFWKQLLFSLLVLILFCDA). A propeptide spanning residues 30 to 132 (CQKISLQVPS…KDAVLRRTKR (103 aa)) is cleaved from the precursor. Cadherin domains are found at residues 133-240 (RWAP…APYF), 241-352 (ENKL…APYF), 353-470 (TETS…GPEC), 471-574 (QPPV…DHPP), and 575-682 (QIKQ…LSRE). Residues 133–692 (RWAPIPCSLM…AALANVFLGK (560 aa)) lie on the Extracellular side of the membrane. An N-linked (GlcNAc...) asparagine glycan is attached at asparagine 163. Threonine 383 is subject to Phosphothreonine. Asparagine 398 and asparagine 545 each carry an N-linked (GlcNAc...) asparagine glycan. A helical transmembrane segment spans residues 693 to 715 (WAILAMVLGSVLLLCILFTCFCV). Over 716–893 (TVKKTVKKCF…RTLAKTCVKK (178 aa)) the chain is Cytoplasmic.

In terms of assembly, binds to JUP/plakoglobin. Isoform 1A is phosphorylated on a serine but isoform 1B is not. In terms of tissue distribution, epidermis and weakly in tongue papillae.

The protein resides in the cell membrane. It localises to the cell junction. The protein localises to the desmosome. A component of desmosome cell-cell junctions which are required for positive regulation of cellular adhesion. Required for desmosome adhesion strength between the granular layers of the epidermis, as a result moderates epidermal proliferation and differentiation. Is therefore required to maintain postnatal epidermal barrier function and normal hair follicle morphology into adulthood. The chain is Desmocollin-1 (DSC1) from Bos taurus (Bovine).